The chain runs to 177 residues: Large ribosomal subunit protein uL6 (177 aa).

This sequence belongs to the universal ribosomal protein uL6 family. As to quaternary structure, part of the 50S ribosomal subunit.

This protein binds to the 23S rRNA, and is important in its secondary structure. It is located near the subunit interface in the base of the L7/L12 stalk, and near the tRNA binding site of the peptidyltransferase center. This Methylobacterium sp. (strain 4-46) protein is Large ribosomal subunit protein uL6.